A 222-amino-acid chain; its full sequence is Voltage-dependent calcium channel gamma-1 subunit (222 aa).

At 1–10 (MSQTKMLKVR) the chain is on the cytoplasmic side. A helical transmembrane segment spans residues 11–29 (VTLFCILAGIVLAMTAVVT). Residues 30–108 (DHWAVLSPHM…TQKEYSISAA (79 aa)) are Extracellular-facing. N-linked (GlcNAc...) asparagine glycosylation is found at Asn-43 and Asn-79. Residues Cys-57 and Cys-80 are joined by a disulfide bond. A helical transmembrane segment spans residues 109-129 (AIAIFSLGFIILGSLCVLLSL). Topologically, residues 130 to 134 (GKKRD) are cytoplasmic. Residues 135–155 (YLLRPASMFYAFAGLCILVSV) traverse the membrane as a helical segment. Residues 156–179 (EVMRQSVKRMIDSEDTVWIEYYYS) lie on the Extracellular side of the membrane. The helical transmembrane segment at 180-204 (WSFACACAAFILLFLGGLALLLFSL) threads the bilayer. The Cytoplasmic portion of the chain corresponds to 205–222 (PRMPRNPWESCMDAEPEH).

It belongs to the PMP-22/EMP/MP20 family. CACNG subfamily. In terms of assembly, component of a calcium channel complex consisting of a pore-forming alpha subunit (CACNA1S) and the ancillary subunits CACNB1 or CACNB2, CACNG1 and CACNA2D1. The channel complex contains alpha, beta, gamma and delta subunits in a 1:1:1:1 ratio, i.e. it contains either CACNB1 or CACNB2. N-glycosylated. As to expression, skeletal muscle.

Its subcellular location is the cell membrane. It is found in the sarcolemma. In terms of biological role, regulatory subunit of the voltage-gated calcium channel that gives rise to L-type calcium currents in skeletal muscle. Regulates channel inactivation kinetics. In Homo sapiens (Human), this protein is Voltage-dependent calcium channel gamma-1 subunit (CACNG1).